Consider the following 574-residue polypeptide: Intraflagellar transport protein 56 homolog (574 aa).

TPR repeat units follow at residues 20-52 (AQKM…GNLD), 57-90 (DSLQ…DDAP), and 151-184 (LEDR…SPNL).

Belongs to the IFT56 family. Component of the IFT complex B composed of at least che-2, che-13, dyf-1, dyf-3, dyf-6, dyf-11, dyf-13, ift-20, ift-74, ift-81, ifta-2, osm-1, osm-5 and osm-6.

The protein localises to the cell projection. It localises to the cilium. Functionally, component of the intraflagellar transport (IFT) complex B required for transport of proteins in the motile cilium. May be required for ciliary entrance and transport of specific ciliary cargo proteins such as che-3 which are related to motility. The sequence is that of Intraflagellar transport protein 56 homolog from Caenorhabditis elegans.